A 250-amino-acid polypeptide reads, in one-letter code: Small ribosomal subunit protein uS3 (250 aa).

Positions valine 39–aspartate 107 constitute a KH type-2 domain. Positions valine 214 to glutamate 250 are disordered. Residues glutamine 220–glutamate 250 are compositionally biased toward basic and acidic residues.

This sequence belongs to the universal ribosomal protein uS3 family. In terms of assembly, part of the 30S ribosomal subunit. Forms a tight complex with proteins S10 and S14.

In terms of biological role, binds the lower part of the 30S subunit head. Binds mRNA in the 70S ribosome, positioning it for translation. The polypeptide is Small ribosomal subunit protein uS3 (Acinetobacter baylyi (strain ATCC 33305 / BD413 / ADP1)).